We begin with the raw amino-acid sequence, 1038 residues long: Kinesin-like protein KIN-5B (1038 aa).

Positions 1-63 are disordered; the sequence is MAQTPNPSRR…GGGGGGGSEM (63 aa). The segment covering 24–34 has biased composition (basic and acidic residues); that stretch reads RPERRQLELRW. Over residues 49–61 the composition is skewed to gly residues; sequence GLTGGGGGGGGGS. Residues 69-410 form the Kinesin motor domain; it reads NVQVVLRCRP…LDYAYRAKSI (342 aa). Position 154 to 161 (154 to 161) interacts with ATP; sequence GQTGTGKT. Positions 453 to 502 form a coiled coil; the sequence is QERFALEEAEKKTMRDKIEYLETQNKELKMNIESCKKEYLDLEEAHSRAN. The tract at residues 1013-1038 is disordered; it reads DKGKRYVDQGTRTPRSPLMPVNHYNK.

The protein belongs to the TRAFAC class myosin-kinesin ATPase superfamily. Kinesin family. KIN-5/BimC subfamily.

It localises to the cytoplasm. Its subcellular location is the cytoskeleton. It is found in the spindle. Its function is as follows. Responsible for microtubule translocation. May be important for the organization of phragmoplast-specific arrays of microtubules. Plays an essential role in stabilizing the mitotic spindle. Required during mitotic cytokinesis. This Oryza sativa subsp. japonica (Rice) protein is Kinesin-like protein KIN-5B.